A 151-amino-acid polypeptide reads, in one-letter code: Putative esterase VNG_1336C (151 aa).

The protein belongs to the thioesterase PaaI family.

This chain is Putative esterase VNG_1336C, found in Halobacterium salinarum (strain ATCC 700922 / JCM 11081 / NRC-1) (Halobacterium halobium).